The primary structure comprises 511 residues: V-type proton ATPase subunit B, brain isoform (511 aa).

Arginine 400 is a binding site for ATP.

The protein belongs to the ATPase alpha/beta chains family. V-ATPase is a heteromultimeric enzyme made up of two complexes: the ATP-hydrolytic V1 complex and the proton translocation V0 complex. The V1 complex consists of three catalytic AB heterodimers that form a heterohexamer, three peripheral stalks each consisting of EG heterodimers, one central rotor including subunits D and F, and the regulatory subunits C and H. The proton translocation complex V0 consists of the proton transport subunit a, a ring of proteolipid subunits c9c'', rotary subunit d, subunits e and f, and the accessory subunits ATP6AP1/Ac45 and ATP6AP2/PRR. Expressed in brain (at protein level). Expressed in all tissues tested, but highest in brain and in adrenal medulla.

It localises to the apical cell membrane. It is found in the melanosome. The protein resides in the cytoplasm. The protein localises to the cytoplasmic vesicle. Its subcellular location is the clathrin-coated vesicle membrane. It localises to the secretory vesicle. It is found in the synaptic vesicle membrane. Functionally, non-catalytic subunit of the V1 complex of vacuolar(H+)-ATPase (V-ATPase), a multisubunit enzyme composed of a peripheral complex (V1) that hydrolyzes ATP and a membrane integral complex (V0) that translocates protons. V-ATPase is responsible for acidifying and maintaining the pH of intracellular compartments and in some cell types, is targeted to the plasma membrane, where it is responsible for acidifying the extracellular environment. In renal intercalated cells, can partially compensate the lack of ATP6V1B1 and mediate secretion of protons (H+) into the urine under base-line conditions but not in conditions of acid load. This Bos taurus (Bovine) protein is V-type proton ATPase subunit B, brain isoform (ATP6V1B2).